Reading from the N-terminus, the 282-residue chain is Shikimate dehydrogenase (NADP(+)) (282 aa).

Shikimate contacts are provided by residues 15-17 (SKS) and threonine 62. Residue lysine 66 is the Proton acceptor of the active site. Shikimate contacts are provided by asparagine 87 and aspartate 103. NADP(+) is bound by residues 127–131 (GAGGA), 151–156 (NRTHTK), and methionine 220. Tyrosine 222 serves as a coordination point for shikimate. Glycine 244 is a binding site for NADP(+).

It belongs to the shikimate dehydrogenase family. Homodimer.

It catalyses the reaction shikimate + NADP(+) = 3-dehydroshikimate + NADPH + H(+). The protein operates within metabolic intermediate biosynthesis; chorismate biosynthesis; chorismate from D-erythrose 4-phosphate and phosphoenolpyruvate: step 4/7. Involved in the biosynthesis of the chorismate, which leads to the biosynthesis of aromatic amino acids. Catalyzes the reversible NADPH linked reduction of 3-dehydroshikimate (DHSA) to yield shikimate (SA). In Shewanella baltica (strain OS223), this protein is Shikimate dehydrogenase (NADP(+)).